The following is a 67-amino-acid chain: DNA-directed RNA polymerase subunit omega (67 aa).

Belongs to the RNA polymerase subunit omega family. As to quaternary structure, the RNAP catalytic core consists of 2 alpha, 1 beta, 1 beta' and 1 omega subunit. When a sigma factor is associated with the core the holoenzyme is formed, which can initiate transcription.

The catalysed reaction is RNA(n) + a ribonucleoside 5'-triphosphate = RNA(n+1) + diphosphate. Its function is as follows. Promotes RNA polymerase assembly. Latches the N- and C-terminal regions of the beta' subunit thereby facilitating its interaction with the beta and alpha subunits. The chain is DNA-directed RNA polymerase subunit omega from Nautilia profundicola (strain ATCC BAA-1463 / DSM 18972 / AmH).